Consider the following 313-residue polypeptide: Pyrimidine-specific ribonucleoside hydrolase RihB (313 aa).

The Proton acceptor role is filled by Glu-11. Positions 11, 16, and 124 each coordinate Ca(2+). Substrate contacts are provided by Gln-227 and His-239. Asp-240 contacts Ca(2+).

This sequence belongs to the IUNH family. RihB subfamily. As to quaternary structure, homotetramer. It depends on Ca(2+) as a cofactor.

The enzyme catalyses a pyrimidine ribonucleoside + H2O = a pyrimidine nucleobase + D-ribose. Functionally, hydrolyzes cytidine or uridine to ribose and cytosine or uracil, respectively. Has a clear preference for cytidine over uridine. Strictly specific for ribonucleosides. The sequence is that of Pyrimidine-specific ribonucleoside hydrolase RihB from Shigella flexneri serotype 5b (strain 8401).